The chain runs to 241 residues: Probable transcriptional regulatory protein H16_A0916 (241 aa).

This sequence belongs to the TACO1 family.

Its subcellular location is the cytoplasm. This is Probable transcriptional regulatory protein H16_A0916 from Cupriavidus necator (strain ATCC 17699 / DSM 428 / KCTC 22496 / NCIMB 10442 / H16 / Stanier 337) (Ralstonia eutropha).